The primary structure comprises 808 residues: Anaphase-promoting complex subunit 4 (808 aa).

At Y469 the chain carries Phosphotyrosine. Phosphoserine occurs at positions 757 and 758. K772 is covalently cross-linked (Glycyl lysine isopeptide (Lys-Gly) (interchain with G-Cter in SUMO2)). Phosphoserine is present on residues S777 and S779. K798 is covalently cross-linked (Glycyl lysine isopeptide (Lys-Gly) (interchain with G-Cter in SUMO2)).

The protein belongs to the APC4 family. In terms of assembly, the mammalian APC/C is composed at least of 14 distinct subunits ANAPC1, ANAPC2, CDC27/APC3, ANAPC4, ANAPC5, CDC16/APC6, ANAPC7, CDC23/APC8, ANAPC10, ANAPC11, CDC26/APC12, ANAPC13, ANAPC15 and ANAPC16 that assemble into a complex of at least 19 chains with a combined molecular mass of around 1.2 MDa; APC/C interacts with FZR1 and FBXO5. In the context of the APC/C complex, directly interacts with UBE2S. Interacts with FBXO43.

Its subcellular location is the nucleus. It functions in the pathway protein modification; protein ubiquitination. In terms of biological role, component of the anaphase promoting complex/cyclosome (APC/C), a cell cycle-regulated E3 ubiquitin ligase that controls progression through mitosis and the G1 phase of the cell cycle. The APC/C complex acts by mediating ubiquitination and subsequent degradation of target proteins: it mainly mediates the formation of 'Lys-11'-linked polyubiquitin chains and, to a lower extent, the formation of 'Lys-48'- and 'Lys-63'-linked polyubiquitin chains. The APC/C complex catalyzes assembly of branched 'Lys-11'-/'Lys-48'-linked branched ubiquitin chains on target proteins. In Homo sapiens (Human), this protein is Anaphase-promoting complex subunit 4 (ANAPC4).